The following is a 46-amino-acid chain: Alpha-1-antiproteinase (46 aa).

Ser30 carries the post-translational modification Phosphoserine.

The protein belongs to the serpin family. N-glycosylated; contains bi- and triantennary glycans with a bisecting N-acetylglucosamine and fucose residue. In terms of tissue distribution, plasma.

It localises to the secreted. This is Alpha-1-antiproteinase from Notamacropus eugenii (Tammar wallaby).